The primary structure comprises 383 residues: Putative F-box protein At1g77650 (383 aa).

The 47-residue stretch at 1–47 (MAFLSLPSDVVEEFLFKTPIESLVLCKPTCKQLYALCNDKRFIYNHL) folds into the F-box domain.

This Arabidopsis thaliana (Mouse-ear cress) protein is Putative F-box protein At1g77650.